A 109-amino-acid polypeptide reads, in one-letter code: U16-hexatoxin-Hi1a (109 aa).

Residues 1–16 form the signal peptide; the sequence is LTGHLCCMMIWWQATQ. The propeptide occupies 17–43; it reads VISPPLPVIREENNSHKMGVSLFPLKR.

In terms of processing, contains 2 disulfide bonds. As to expression, expressed by the venom gland.

It localises to the secreted. Its function is as follows. Probable ion channel inhibitor. The sequence is that of U16-hexatoxin-Hi1a from Hadronyche infensa (Fraser island funnel-web spider).